The chain runs to 831 residues: DNA ligase (831 aa).

NAD(+)-binding positions include 34–38 (DADYD), 83–84 (SL), and Glu114. The active-site N6-AMP-lysine intermediate is Lys116. Arg137, Glu174, Lys291, and Lys315 together coordinate NAD(+). Residues Cys409, Cys412, Cys427, and Cys433 each coordinate Zn(2+). Residues 749 to 831 (AHTAPLNGQS…LDFLEQYSAQ (83 aa)) form the BRCT domain.

The protein belongs to the NAD-dependent DNA ligase family. LigA subfamily. Mg(2+) serves as cofactor. The cofactor is Mn(2+).

It catalyses the reaction NAD(+) + (deoxyribonucleotide)n-3'-hydroxyl + 5'-phospho-(deoxyribonucleotide)m = (deoxyribonucleotide)n+m + AMP + beta-nicotinamide D-nucleotide.. Functionally, DNA ligase that catalyzes the formation of phosphodiester linkages between 5'-phosphoryl and 3'-hydroxyl groups in double-stranded DNA using NAD as a coenzyme and as the energy source for the reaction. It is essential for DNA replication and repair of damaged DNA. This chain is DNA ligase, found in Xylella fastidiosa (strain M12).